The sequence spans 439 residues: Tol-Pal system protein TolB (439 aa).

The N-terminal stretch at 1 to 22 is a signal peptide; it reads MKKPLRWLAALTVLLLPLSALA.

The protein belongs to the TolB family. In terms of assembly, the Tol-Pal system is composed of five core proteins: the inner membrane proteins TolA, TolQ and TolR, the periplasmic protein TolB and the outer membrane protein Pal. They form a network linking the inner and outer membranes and the peptidoglycan layer.

It localises to the periplasm. Part of the Tol-Pal system, which plays a role in outer membrane invagination during cell division and is important for maintaining outer membrane integrity. This chain is Tol-Pal system protein TolB, found in Xanthomonas oryzae pv. oryzae (strain KACC10331 / KXO85).